Reading from the N-terminus, the 226-residue chain is Leucyl/phenylalanyl-tRNA--protein transferase (226 aa).

This sequence belongs to the L/F-transferase family.

It localises to the cytoplasm. It catalyses the reaction N-terminal L-lysyl-[protein] + L-leucyl-tRNA(Leu) = N-terminal L-leucyl-L-lysyl-[protein] + tRNA(Leu) + H(+). The catalysed reaction is N-terminal L-arginyl-[protein] + L-leucyl-tRNA(Leu) = N-terminal L-leucyl-L-arginyl-[protein] + tRNA(Leu) + H(+). It carries out the reaction L-phenylalanyl-tRNA(Phe) + an N-terminal L-alpha-aminoacyl-[protein] = an N-terminal L-phenylalanyl-L-alpha-aminoacyl-[protein] + tRNA(Phe). Functionally, functions in the N-end rule pathway of protein degradation where it conjugates Leu, Phe and, less efficiently, Met from aminoacyl-tRNAs to the N-termini of proteins containing an N-terminal arginine or lysine. The sequence is that of Leucyl/phenylalanyl-tRNA--protein transferase from Bradyrhizobium diazoefficiens (strain JCM 10833 / BCRC 13528 / IAM 13628 / NBRC 14792 / USDA 110).